Here is a 400-residue protein sequence, read N- to C-terminus: Argininosuccinate synthase (400 aa).

ATP is bound by residues 6–14 and A33; that span reads AYSGGLDTS. Residues Y84 and S89 each coordinate L-citrulline. ATP is bound at residue G114. 3 residues coordinate L-aspartate: T116, N120, and D121. Residue N120 participates in L-citrulline binding. 5 residues coordinate L-citrulline: R124, S173, S182, E258, and Y270.

This sequence belongs to the argininosuccinate synthase family. Type 1 subfamily. Homotetramer.

It localises to the cytoplasm. The enzyme catalyses L-citrulline + L-aspartate + ATP = 2-(N(omega)-L-arginino)succinate + AMP + diphosphate + H(+). Its pathway is amino-acid biosynthesis; L-arginine biosynthesis; L-arginine from L-ornithine and carbamoyl phosphate: step 2/3. This chain is Argininosuccinate synthase, found in Thermus thermophilus (strain ATCC BAA-163 / DSM 7039 / HB27).